Reading from the N-terminus, the 399-residue chain is Acetate kinase (399 aa).

N10 is a Mg(2+) binding site. Position 17 (K17) interacts with ATP. Substrate is bound at residue R91. D148 functions as the Proton donor/acceptor in the catalytic mechanism. ATP contacts are provided by residues 208–212 (HLGNG), 283–285 (DCR), and 331–335 (GIGEN). E385 contributes to the Mg(2+) binding site.

It belongs to the acetokinase family. In terms of assembly, homodimer. It depends on Mg(2+) as a cofactor. Requires Mn(2+) as cofactor.

It localises to the cytoplasm. The catalysed reaction is acetate + ATP = acetyl phosphate + ADP. Its pathway is metabolic intermediate biosynthesis; acetyl-CoA biosynthesis; acetyl-CoA from acetate: step 1/2. Functionally, catalyzes the formation of acetyl phosphate from acetate and ATP. Can also catalyze the reverse reaction. This is Acetate kinase from Shewanella sp. (strain MR-4).